We begin with the raw amino-acid sequence, 353 residues long: UDP-N-acetylglucosamine--N-acetylmuramyl-(pentapeptide) pyrophosphoryl-undecaprenol N-acetylglucosamine transferase (353 aa).

Residues 10-12 (TGG), Asn124, Ser183, and Gln283 each bind UDP-N-acetyl-alpha-D-glucosamine.

The protein belongs to the glycosyltransferase 28 family. MurG subfamily.

The protein localises to the cell inner membrane. It catalyses the reaction di-trans,octa-cis-undecaprenyl diphospho-N-acetyl-alpha-D-muramoyl-L-alanyl-D-glutamyl-meso-2,6-diaminopimeloyl-D-alanyl-D-alanine + UDP-N-acetyl-alpha-D-glucosamine = di-trans,octa-cis-undecaprenyl diphospho-[N-acetyl-alpha-D-glucosaminyl-(1-&gt;4)]-N-acetyl-alpha-D-muramoyl-L-alanyl-D-glutamyl-meso-2,6-diaminopimeloyl-D-alanyl-D-alanine + UDP + H(+). Its pathway is cell wall biogenesis; peptidoglycan biosynthesis. Functionally, cell wall formation. Catalyzes the transfer of a GlcNAc subunit on undecaprenyl-pyrophosphoryl-MurNAc-pentapeptide (lipid intermediate I) to form undecaprenyl-pyrophosphoryl-MurNAc-(pentapeptide)GlcNAc (lipid intermediate II). This chain is UDP-N-acetylglucosamine--N-acetylmuramyl-(pentapeptide) pyrophosphoryl-undecaprenol N-acetylglucosamine transferase, found in Helicobacter pylori (strain G27).